Here is a 104-residue protein sequence, read N- to C-terminus: Large ribosomal subunit protein bL21 (104 aa).

This sequence belongs to the bacterial ribosomal protein bL21 family. In terms of assembly, part of the 50S ribosomal subunit. Contacts protein L20.

Functionally, this protein binds to 23S rRNA in the presence of protein L20. This chain is Large ribosomal subunit protein bL21, found in Azobacteroides pseudotrichonymphae genomovar. CFP2.